A 281-amino-acid chain; its full sequence is Lipoyl synthase (281 aa).

Cys-37, Cys-42, Cys-48, Cys-63, Cys-67, Cys-70, and Ser-274 together coordinate [4Fe-4S] cluster. The 215-residue stretch at 49 to 263 (WSRGTATFMI…RQQAVNKGFK (215 aa)) folds into the Radical SAM core domain.

The protein belongs to the radical SAM superfamily. Lipoyl synthase family. [4Fe-4S] cluster serves as cofactor.

Its subcellular location is the cytoplasm. It catalyses the reaction [[Fe-S] cluster scaffold protein carrying a second [4Fe-4S](2+) cluster] + N(6)-octanoyl-L-lysyl-[protein] + 2 oxidized [2Fe-2S]-[ferredoxin] + 2 S-adenosyl-L-methionine + 4 H(+) = [[Fe-S] cluster scaffold protein] + N(6)-[(R)-dihydrolipoyl]-L-lysyl-[protein] + 4 Fe(3+) + 2 hydrogen sulfide + 2 5'-deoxyadenosine + 2 L-methionine + 2 reduced [2Fe-2S]-[ferredoxin]. The protein operates within protein modification; protein lipoylation via endogenous pathway; protein N(6)-(lipoyl)lysine from octanoyl-[acyl-carrier-protein]: step 2/2. In terms of biological role, catalyzes the radical-mediated insertion of two sulfur atoms into the C-6 and C-8 positions of the octanoyl moiety bound to the lipoyl domains of lipoate-dependent enzymes, thereby converting the octanoylated domains into lipoylated derivatives. In Parabacteroides distasonis (strain ATCC 8503 / DSM 20701 / CIP 104284 / JCM 5825 / NCTC 11152), this protein is Lipoyl synthase.